The chain runs to 478 residues: Zinc metalloproteinase/disintegrin (478 aa).

The first 20 residues, 1-20, serve as a signal peptide directing secretion; sequence MIEVLLVTICLAVFPYPGSS. A propeptide spanning residues 21–190 is cleaved from the precursor; sequence IILESGNVDD…KASQLYLTPE (170 aa). Glutamine 191 bears the Pyrrolidone carboxylic acid mark. One can recognise a Peptidase M12B domain in the interval 197–392; sequence RYIELAIVVD…SKPQCIINAP (196 aa). Ca(2+)-binding residues include glutamate 200 and aspartate 284. Disulfide bonds link cysteine 308–cysteine 387, cysteine 349–cysteine 371, and cysteine 351–cysteine 354. Histidine 333 contacts Zn(2+). Glutamate 334 is an active-site residue. Histidine 337 and histidine 343 together coordinate Zn(2+). Cysteine 387 and asparagine 390 together coordinate Ca(2+). A propeptide spanning residues 393 to 410 is cleaved from the precursor; the sequence is LRTDTVSTPVSGNEFLEA. Residues 400 to 478 enclose the Disintegrin domain; it reads TPVSGNEFLE…GQSADCPRNS (79 aa). 6 disulfides stabilise this stretch: cysteine 414-cysteine 429, cysteine 416-cysteine 424, cysteine 423-cysteine 446, cysteine 437-cysteine 443, cysteine 442-cysteine 467, and cysteine 455-cysteine 474. The Cell attachment site motif lies at 459–461; sequence RGD. The interval 459–478 is disordered; that stretch reads RGDNPDDRCTGQSADCPRNS. Residues 468 to 478 show a composition bias toward polar residues; it reads TGQSADCPRNS.

It belongs to the venom metalloproteinase (M12B) family. P-II subfamily. P-IIa sub-subfamily. In terms of assembly, monomer. It depends on Zn(2+) as a cofactor. Not N-glycosylated. Expressed by the venom gland.

It localises to the secreted. The enzyme catalyses Cleavage of 3-Asn-|-Gln-4, 10-His-|-Leu-11 and 14-Ala-|-Leu-15 in the insulin B chain, and the bond Z-Gly-Pro-|-Leu-Gly-Pro in a small molecule substrate of microbial collagenase.. Zinc protease that induces hemorrhage. Its function is as follows. Inhibits platelet aggregation induced by ADP, thrombin, and collagen. Acts by inhibiting fibrinogen interaction with platelet receptors GPIIb/GPIIIa (ITGA2B/ITGB3). This is Zinc metalloproteinase/disintegrin from Protobothrops flavoviridis (Habu).